We begin with the raw amino-acid sequence, 547 residues long: Chaperonin GroEL (547 aa).

Residues 30 to 33 (TLGP), Lys-51, 87 to 91 (DGTTT), Gly-415, 479 to 481 (NAA), and Asp-495 each bind ATP.

Belongs to the chaperonin (HSP60) family. Forms a cylinder of 14 subunits composed of two heptameric rings stacked back-to-back. Interacts with the co-chaperonin GroES.

The protein localises to the cytoplasm. It carries out the reaction ATP + H2O + a folded polypeptide = ADP + phosphate + an unfolded polypeptide.. In terms of biological role, together with its co-chaperonin GroES, plays an essential role in assisting protein folding. The GroEL-GroES system forms a nano-cage that allows encapsulation of the non-native substrate proteins and provides a physical environment optimized to promote and accelerate protein folding. The polypeptide is Chaperonin GroEL (Nitratidesulfovibrio vulgaris (strain ATCC 29579 / DSM 644 / CCUG 34227 / NCIMB 8303 / VKM B-1760 / Hildenborough) (Desulfovibrio vulgaris)).